The primary structure comprises 685 residues: Invasion protein InvA (685 aa).

The next 8 helical transmembrane spans lie at 17-37, 39-59, 61-81, 110-130, 197-217, 235-255, 274-294, and 295-315; these read ILVLMVMIISMFVIPLPTYLV, FLIALNIVLAILVFMGSFYID, ILSFSTFPAVLLITTLFRLAL, SLAVGFVVFSIVTVVQFIVIT, AIAGIIIIFVNFIGGISVGMT, IGDGLVAQIPALLIAISAGFI, LLNNPFVLVVTAILTISMGTL, and PGFPLPVFVILSVVLSVLFYF.

This sequence belongs to the FHIPEP (flagella/HR/invasion proteins export pore) family.

The protein resides in the cell inner membrane. Functionally, involved in the invasion of the cells of the intestinal epithelium. Could be involved in the translocation of the InvE protein. In Salmonella typhi, this protein is Invasion protein InvA (invA).